A 368-amino-acid polypeptide reads, in one-letter code: Putative F-box/kelch-repeat protein At5g02995 (368 aa).

The 50-residue stretch at 35–84 (SLYWNDPTEDCVWNCLARISRFHYPTLSLVSKGFRSLIASPELEATRSFI) folds into the F-box domain. Kelch repeat units follow at residues 140-186 (DIYI…IVDK) and 187-233 (KIYV…VSGG).

The chain is Putative F-box/kelch-repeat protein At5g02995 from Arabidopsis thaliana (Mouse-ear cress).